Reading from the N-terminus, the 180-residue chain is MNFKGTTVIAIRRAGKTVVAADGQVTFGYTVLKSNAVKIRKLVNGKILAGFAGSTSDAITLFEKFEEKVKSREDGIIDIKRAAVDLAKDWRADKILHKLEAMMLVADSDNILLISGTGDVVEPEEDVISIGSGGNYAYSAALAYMENKKLSAADIAFKALKIAARVCIYTNSNIVLEEIG.

Thr6 is an active-site residue. Na(+) is bound by residues Ala164, Cys167, and Thr170.

The protein belongs to the peptidase T1B family. HslV subfamily. A double ring-shaped homohexamer of HslV is capped on each side by a ring-shaped HslU homohexamer. The assembly of the HslU/HslV complex is dependent on binding of ATP.

The protein localises to the cytoplasm. It carries out the reaction ATP-dependent cleavage of peptide bonds with broad specificity.. Allosterically activated by HslU binding. In terms of biological role, protease subunit of a proteasome-like degradation complex believed to be a general protein degrading machinery. The protein is ATP-dependent protease subunit HslV of Borrelia recurrentis (strain A1).